Consider the following 397-residue polypeptide: Acetate kinase (397 aa).

N8 provides a ligand contact to Mg(2+). Residue K15 participates in ATP binding. Substrate is bound at residue R89. The active-site Proton donor/acceptor is the D146. Residues 206–210 (HLGNG), 281–283 (DLR), and 329–333 (GVGEN) each bind ATP. Mg(2+) is bound at residue E382.

The protein belongs to the acetokinase family. In terms of assembly, homodimer. Mg(2+) serves as cofactor. Mn(2+) is required as a cofactor.

The protein resides in the cytoplasm. The catalysed reaction is acetate + ATP = acetyl phosphate + ADP. The protein operates within metabolic intermediate biosynthesis; acetyl-CoA biosynthesis; acetyl-CoA from acetate: step 1/2. Functionally, catalyzes the formation of acetyl phosphate from acetate and ATP. Can also catalyze the reverse reaction. This Bacillus cereus (strain ATCC 10987 / NRS 248) protein is Acetate kinase.